Here is a 270-residue protein sequence, read N- to C-terminus: Elongation factor Ts (270 aa).

The interval T76–V79 is involved in Mg(2+) ion dislocation from EF-Tu.

The protein belongs to the EF-Ts family.

It localises to the cytoplasm. Its function is as follows. Associates with the EF-Tu.GDP complex and induces the exchange of GDP to GTP. It remains bound to the aminoacyl-tRNA.EF-Tu.GTP complex up to the GTP hydrolysis stage on the ribosome. The protein is Elongation factor Ts of Corynebacterium aurimucosum (strain ATCC 700975 / DSM 44827 / CIP 107346 / CN-1) (Corynebacterium nigricans).